Consider the following 80-residue polypeptide: Cell division protein ZapB (80 aa).

A coiled-coil region spans residues 3–80 (FEVLEQLESK…ALLGKMDEVE (78 aa)). Residues 41–53 (ANELRSQREELEQ) show a composition bias toward basic and acidic residues. The tract at residues 41 to 60 (ANELRSQREELEQKSQQAQQ) is disordered.

This sequence belongs to the ZapB family. Homodimer. The ends of the coiled-coil dimer bind to each other, forming polymers. Interacts with FtsZ.

The protein resides in the cytoplasm. Non-essential, abundant cell division factor that is required for proper Z-ring formation. It is recruited early to the divisome by direct interaction with FtsZ, stimulating Z-ring assembly and thereby promoting cell division earlier in the cell cycle. Its recruitment to the Z-ring requires functional FtsA or ZipA. In Vibrio campbellii (strain ATCC BAA-1116), this protein is Cell division protein ZapB.